We begin with the raw amino-acid sequence, 342 residues long: Succinylglutamate desuccinylase (342 aa).

Residues His64, Glu67, and His159 each coordinate Zn(2+). Residue Glu222 is part of the active site.

The protein belongs to the AspA/AstE family. Succinylglutamate desuccinylase subfamily. Zn(2+) is required as a cofactor.

The enzyme catalyses N-succinyl-L-glutamate + H2O = L-glutamate + succinate. It functions in the pathway amino-acid degradation; L-arginine degradation via AST pathway; L-glutamate and succinate from L-arginine: step 5/5. In terms of biological role, transforms N(2)-succinylglutamate into succinate and glutamate. This chain is Succinylglutamate desuccinylase, found in Burkholderia orbicola (strain AU 1054).